Reading from the N-terminus, the 559-residue chain is MKPSHSDTPLMMPSVMKCGYLATAGLIGICTHLSYFRYGEHHLYPWRYVRFHLCLTMGVAALLYAKKPPQYTLCSMDLVKDVSLLMATYLVGLFASLLLYRTLFHPLRQIRGPWAAKISSFWLSFRLRRGPSFRILHELHEEYGPVVRVGPSEVSIIHPEAVRMIYGPNSRCSKNTFYDNGHPMMSLHSYRDRIAHDQRRRVWSAGFGDRALRGYEQRMRVYRQKLFQRLEARAVAESAINISQWFNFYSYDTMGDLAFARSFDMLDASRNHWAVDMLMHGMIGYRYLFPSWFFRLLATMPSLSSDWHKFIGFATDTMLRRVGEQVDVPDIFASLLAPLNGREPTEDERNMLMGDAMLIITAGSDTTATSLTSIVYELARHLDEVDKLRAELDPIEADSDGEYQHDTLAKLPHLNGFINETLRLHPPIPGVIPRKTPPEGIHVKDVFIPGNMTVFSPQWSMGRSEAAYIDPEIFNPERWYKHMDLVKDPSAFAPFSIGPYSCIGKPLALMNIRTTVARLIMSFDVRFPEGEDGIRWMDAADEHFAMGIHQMPVVLTRRH.

A run of 3 helical transmembrane segments spans residues 13–35, 48–65, and 82–104; these read PSVM…HLSY, YVRF…LLYA, and VSLL…RTLF. Cysteine 502 serves as a coordination point for heme.

It belongs to the cytochrome P450 family. Requires heme as cofactor.

It localises to the membrane. The enzyme catalyses tryprostatin B + reduced [NADPH--hemoprotein reductase] + O2 = 6-hydroxytryprostatin B + oxidized [NADPH--hemoprotein reductase] + H2O + H(+). The protein operates within mycotoxin biosynthesis. Its function is as follows. Cytochrome P450 monooxygenase; part of the gene cluster that mediates the biosynthesis of fumitremorgins, indole alkaloids that carry not only intriguing chemical structures, but also interesting biological and pharmacological activities. The biosynthesis of fumitremorgin-type alkaloids begins by condensation of the two amino acids L-tryptophan and L-proline to brevianamide F, catalyzed by the non-ribosomal peptide synthetase ftmA. Brevianamide F is then prenylated by the prenyltransferase ftmPT1/ftmB in the presence of dimethylallyl diphosphate, resulting in the formation of tryprostatin B. The three cytochrome P450 monooxygenases, ftmP450-1/ftmC, ftmP450-2/ftmE and ftmP450-3/FtmG, are responsible for the conversion of tryprostatin B to 6-hydroxytryprostatin B, tryprostatin A to fumitremorgin C and fumitremorgin C to 12,13-dihydroxyfumitremorgin C, respectively. The putative methyltransferase ftmMT/ftmD is expected for the conversion of 6-hydroxytryprostatin B to tryprostatin A. FtmPT2/FtmH catalyzes the prenylation of 12,13-dihydroxyfumitre-morgin C in the presence of dimethylallyl diphosphate, resulting in the formation of fumitremorgin B. Fumitremorgin B is further converted to verruculogen by ftmOx1/ftmF via the insertion of an endoperoxide bond between the two prenyl moieties. In some fungal species, verruculogen is further converted to fumitremorgin A, but the enzymes involved in this step have not been identified yet. The protein is Tryprostatin B 6-hydroxylase of Aspergillus fumigatus (Neosartorya fumigata).